The primary structure comprises 125 residues: Small ribosomal subunit protein uS12 (125 aa).

Asp-89 bears the 3-methylthioaspartic acid mark. Residues 100 to 125 (GSLDTQGVKDRKQSRSKYGAKRPKAA) are disordered. Positions 113-125 (SRSKYGAKRPKAA) are enriched in basic residues.

Belongs to the universal ribosomal protein uS12 family. Part of the 30S ribosomal subunit. Contacts proteins S8 and S17. May interact with IF1 in the 30S initiation complex.

In terms of biological role, with S4 and S5 plays an important role in translational accuracy. Interacts with and stabilizes bases of the 16S rRNA that are involved in tRNA selection in the A site and with the mRNA backbone. Located at the interface of the 30S and 50S subunits, it traverses the body of the 30S subunit contacting proteins on the other side and probably holding the rRNA structure together. The combined cluster of proteins S8, S12 and S17 appears to hold together the shoulder and platform of the 30S subunit. This chain is Small ribosomal subunit protein uS12, found in Dechloromonas aromatica (strain RCB).